The primary structure comprises 431 residues: Serine--tRNA ligase (431 aa).

235–237 (TAE) serves as a coordination point for L-serine. Residues 266 to 268 (RRE) and V282 each bind ATP. E289 contributes to the L-serine binding site. 353–356 (EASS) contacts ATP. S389 is a binding site for L-serine.

It belongs to the class-II aminoacyl-tRNA synthetase family. Type-1 seryl-tRNA synthetase subfamily. Homodimer. The tRNA molecule binds across the dimer.

It localises to the cytoplasm. It catalyses the reaction tRNA(Ser) + L-serine + ATP = L-seryl-tRNA(Ser) + AMP + diphosphate + H(+). The enzyme catalyses tRNA(Sec) + L-serine + ATP = L-seryl-tRNA(Sec) + AMP + diphosphate + H(+). The protein operates within aminoacyl-tRNA biosynthesis; selenocysteinyl-tRNA(Sec) biosynthesis; L-seryl-tRNA(Sec) from L-serine and tRNA(Sec): step 1/1. Its function is as follows. Catalyzes the attachment of serine to tRNA(Ser). Is also able to aminoacylate tRNA(Sec) with serine, to form the misacylated tRNA L-seryl-tRNA(Sec), which will be further converted into selenocysteinyl-tRNA(Sec). The polypeptide is Serine--tRNA ligase (Pelodictyon phaeoclathratiforme (strain DSM 5477 / BU-1)).